A 367-amino-acid chain; its full sequence is MSGSQTLVVKLGTSVLTGGSRRLNRAHIVELVRQCAQQHAKGHRIVIVTFGAIAAGREHLGYPELPATIASKQLLAAVGQSRLIQLWEQLFSIYGIHIGQMLLTRADLEDRERFLNARDTMNALLDNRIVPVINENDAVATAEIKVGDNDNLSALAAILASADKLLLLTDQAGLYTADPRNNPEAELIREVHGIDDVLRGMAGDSVSGLGTGGMATKLQAADVACRAGIDVVIAAGSQVGVIADVIDGTPVGTRFHSLETPLENRKRWIFGAPPAGEITVDDGAVFAIMERGSSLLPKGIRSVKGDFSRGEVIRIRNLNGRDLAHGVSRYNSDALRMLAGHHSQQISEILGYEYGPVAVHRDDMIVS.

ATP is bound at residue Lys-10. 2 residues coordinate substrate: Asp-137 and Asn-149. ATP contacts are provided by residues 169-170 and 211-217; these read TD and TGGMATK. Residues 275–353 enclose the PUA domain; the sequence is AGEITVDDGA…QQISEILGYE (79 aa).

It belongs to the glutamate 5-kinase family.

The protein resides in the cytoplasm. The enzyme catalyses L-glutamate + ATP = L-glutamyl 5-phosphate + ADP. The protein operates within amino-acid biosynthesis; L-proline biosynthesis; L-glutamate 5-semialdehyde from L-glutamate: step 1/2. In terms of biological role, catalyzes the transfer of a phosphate group to glutamate to form L-glutamate 5-phosphate. The polypeptide is Glutamate 5-kinase (Yersinia pestis bv. Antiqua (strain Antiqua)).